A 458-amino-acid polypeptide reads, in one-letter code: Mannan endo-1,6-alpha-mannosidase DFG5 (458 aa).

An N-terminal signal peptide occupies residues 1–26 (MIVNISAKMILSICFTFLSFFKATHA). Asparagine 89, asparagine 114, asparagine 138, asparagine 208, asparagine 231, asparagine 245, asparagine 270, asparagine 273, and asparagine 417 each carry an N-linked (GlcNAc...) asparagine glycan. Positions 399-418 (PYKEDNGGTSKGDANAGMNS) are disordered. Glycine 437 carries the GPI-anchor amidated glycine lipid modification. The propeptide at 438-458 (AAIITAVILSVLTGGAVWMLF) is removed in mature form.

It belongs to the glycosyl hydrolase 76 family. N-glycosylated.

The protein localises to the cell membrane. The enzyme catalyses Random hydrolysis of (1-&gt;6)-alpha-D-mannosidic linkages in unbranched (1-&gt;6)-mannans.. In terms of biological role, required for normal synthesis of the cell wall. In Saccharomyces cerevisiae (strain ATCC 204508 / S288c) (Baker's yeast), this protein is Mannan endo-1,6-alpha-mannosidase DFG5 (DFG5).